A 206-amino-acid polypeptide reads, in one-letter code: MHNDFNLLILSGPSGAGKSTLTKYLQEKIPKTHFSLSTTTRKPREGEVDGLHYNFVSEEEFKQGIEKGQFLEWAIVHNHYYGTSKIPVEKALKEGKIVIFDIDVQGHEILKKHYPNACSVFISTKNQEILKERLLLRGTDSKETIEKRLINAYKEMQCLESFDYLIINEDLEKSKEIILSIAKTLVHRLKAFNFEKICKAWKNESL.

Positions phenylalanine 5 to lysine 183 constitute a Guanylate kinase-like domain. Residue glycine 12 to serine 19 participates in ATP binding.

Belongs to the guanylate kinase family.

The protein localises to the cytoplasm. The catalysed reaction is GMP + ATP = GDP + ADP. Functionally, essential for recycling GMP and indirectly, cGMP. The sequence is that of Guanylate kinase from Helicobacter pylori (strain HPAG1).